We begin with the raw amino-acid sequence, 354 residues long: Putrescine/cadaverine-binding protein (354 aa).

The N-terminal stretch at methionine 1–alanine 20 is a signal peptide.

It belongs to the bacterial solute-binding protein 1 family.

The protein resides in the periplasm. Its function is as follows. Binds putrescine and cadaverine. The polypeptide is Putrescine/cadaverine-binding protein (Pseudomonas aeruginosa (strain ATCC 15692 / DSM 22644 / CIP 104116 / JCM 14847 / LMG 12228 / 1C / PRS 101 / PAO1)).